The sequence spans 1497 residues: Polyunsaturated fatty acid synthase subunit C (1497 aa).

Dehydratase (DH) domain regions lie at residues 271–422 (YKLC…DYGK) and 797–937 (QGQY…RVRI). Residues 944–958 (ASSSASSVGSSASAE) are compositionally biased toward low complexity. A disordered region spans residues 944–977 (ASSSASSVGSSASAEVAERTRSKAAPQPVASGPA). Residues 1026-1470 (LGDLGDRSFM…ILRGACYLRR (445 aa)) are enoylreductase (ER) domain.

Belongs to the thioester dehydratase family. FabA subfamily. Component of the polyunsaturated fatty acid synthase complex composed of at least ORF-A, ORF-B and ORF-C.

It participates in lipid metabolism; fatty acid biosynthesis. Polyketide synthase-like protein; part of the polyunsaturated fatty acid synthase composed of the 3 PKS-like subunits A, B and C. While the saturated fatty acids (SFAs) in Thraustochytrium are produced by the conventional fatty acid synthase (FAS) pathway, polyunsaturated fatty acids (PUFAs) including docosahexeanoic acid (DHA) and docosapentaenoic acid (DPA) are synthesized via an anaerobical PKS pathway. PUFA synthase assimilates fatty acyl-CoA, the product of FAS, as the starter unit to synthesize DPA, and this starter unit may be butyryl-CoA, hexanoyl-CoA, or octanoyl-CoA. DPA and DHA biosynthesis seem to differ by the reduction at the N-3 position by PUFA synthase, not the extension of carbon chain. In DHA biosynthesis, PUFA synthase extends the fatty acyl chain from the methyl toward the carboxyl end, and the double bond is formed when the carbon chain is growing, instead of afterward. Therefore, PUFA synthase is unable to transform DPA to DHA, suggesting that DPA is not the precursor of DHA. Moreover, DPA molecule is partly extended by FAS KS domain, so DPA biosynthesis is less dependent on PUFA synthase KS domain than DHA. The sequence is that of Polyunsaturated fatty acid synthase subunit C from Thraustochytrium sp. (strain ATCC 26185 / S-3).